The primary structure comprises 246 residues: Auxin-responsive protein IAA11 (246 aa).

The EAR-like (transcriptional repression) motif lies at Leu36–Leu40. A PB1 domain is found at Ser136–Thr235.

Belongs to the Aux/IAA family. As to quaternary structure, homodimers and heterodimers. Interacts with TPL. As to expression, preferentially expressed in stems and flowers.

The protein resides in the nucleus. Functionally, aux/IAA proteins are short-lived transcriptional factors that function as repressors of early auxin response genes at low auxin concentrations. Repression is thought to result from the interaction with auxin response factors (ARFs), proteins that bind to the auxin-responsive promoter element (AuxRE). Formation of heterodimers with ARF proteins may alter their ability to modulate early auxin response genes expression. This Arabidopsis thaliana (Mouse-ear cress) protein is Auxin-responsive protein IAA11 (IAA11).